The sequence spans 296 residues: tRNA pseudouridine synthase B (296 aa).

D38 serves as the catalytic Nucleophile.

The protein belongs to the pseudouridine synthase TruB family. Type 1 subfamily.

It catalyses the reaction uridine(55) in tRNA = pseudouridine(55) in tRNA. Responsible for synthesis of pseudouridine from uracil-55 in the psi GC loop of transfer RNAs. The sequence is that of tRNA pseudouridine synthase B from Ehrlichia ruminantium (strain Gardel).